The sequence spans 200 residues: Blue fluorescence protein (200 aa).

2 Lumazine-binding repeats span residues 1–111 and 112–200; these read MFKG…TGGR and SLSG…AGNW.

In terms of assembly, monomer.

The protein resides in the cytoplasm. Its function is as follows. Blue fluorescence protein (BFP) that can bind 6,7-dimethyl-8-ribityllumazine, riboflavin, and 6-methyl-7-oxo-8-ribityllumazine as a bound fluorophore. Has no riboflavin-synthase activity. The protein is Blue fluorescence protein of Aliivibrio fischeri (Vibrio fischeri).